Here is a 350-residue protein sequence, read N- to C-terminus: UDP-glucose 4-epimerase GEPI48 (350 aa).

Position 5-36 (5-36 (TVLVTGGAGYIGSHTVLQLLLGGFKAVVVDNL)) interacts with NAD(+). Ser130 provides a ligand contact to substrate. Tyr154 (proton acceptor) is an active-site residue.

It belongs to the NAD(P)-dependent epimerase/dehydratase family. The cofactor is NAD(+).

It catalyses the reaction UDP-alpha-D-glucose = UDP-alpha-D-galactose. The protein operates within carbohydrate metabolism; galactose metabolism. The chain is UDP-glucose 4-epimerase GEPI48 from Cyamopsis tetragonoloba (Guar).